The chain runs to 385 residues: 1-deoxy-D-xylulose 5-phosphate reductoisomerase (385 aa).

NADPH is bound by residues Thr10, Gly11, Ser12, Ile13, Lys37, and Asn124. A 1-deoxy-D-xylulose 5-phosphate-binding site is contributed by Lys125. An NADPH-binding site is contributed by Glu126. A Mn(2+)-binding site is contributed by Asp150. 1-deoxy-D-xylulose 5-phosphate-binding residues include Ser151, Glu152, Ser176, and His199. Glu152 contacts Mn(2+). Residue Gly205 coordinates NADPH. 1-deoxy-D-xylulose 5-phosphate contacts are provided by Ser212, Asn217, Lys218, and Glu221. Glu221 lines the Mn(2+) pocket.

The protein belongs to the DXR family. Requires Mg(2+) as cofactor. Mn(2+) serves as cofactor.

The enzyme catalyses 2-C-methyl-D-erythritol 4-phosphate + NADP(+) = 1-deoxy-D-xylulose 5-phosphate + NADPH + H(+). The protein operates within isoprenoid biosynthesis; isopentenyl diphosphate biosynthesis via DXP pathway; isopentenyl diphosphate from 1-deoxy-D-xylulose 5-phosphate: step 1/6. Functionally, catalyzes the NADPH-dependent rearrangement and reduction of 1-deoxy-D-xylulose-5-phosphate (DXP) to 2-C-methyl-D-erythritol 4-phosphate (MEP). The protein is 1-deoxy-D-xylulose 5-phosphate reductoisomerase of Clostridium novyi (strain NT).